The chain runs to 320 residues: Methionyl-tRNA formyltransferase (320 aa).

Residue S112–P115 coordinates (6S)-5,6,7,8-tetrahydrofolate.

The protein belongs to the Fmt family.

It catalyses the reaction L-methionyl-tRNA(fMet) + (6R)-10-formyltetrahydrofolate = N-formyl-L-methionyl-tRNA(fMet) + (6S)-5,6,7,8-tetrahydrofolate + H(+). Functionally, attaches a formyl group to the free amino group of methionyl-tRNA(fMet). The formyl group appears to play a dual role in the initiator identity of N-formylmethionyl-tRNA by promoting its recognition by IF2 and preventing the misappropriation of this tRNA by the elongation apparatus. In Shewanella woodyi (strain ATCC 51908 / MS32), this protein is Methionyl-tRNA formyltransferase.